The primary structure comprises 216 residues: UPF0301 protein BBta_6966 (216 aa).

This sequence belongs to the UPF0301 (AlgH) family.

This chain is UPF0301 protein BBta_6966, found in Bradyrhizobium sp. (strain BTAi1 / ATCC BAA-1182).